An 880-amino-acid chain; its full sequence is Leucine--tRNA ligase (880 aa).

Residues 46–56 carry the 'HIGH' region motif; that stretch reads PYPSGALHMGH. Positions 638 to 642 match the 'KMSKS' region motif; the sequence is KMSKS. Lys-641 is an ATP binding site.

Belongs to the class-I aminoacyl-tRNA synthetase family.

It localises to the cytoplasm. It catalyses the reaction tRNA(Leu) + L-leucine + ATP = L-leucyl-tRNA(Leu) + AMP + diphosphate. The polypeptide is Leucine--tRNA ligase (Xanthomonas axonopodis pv. citri (strain 306)).